We begin with the raw amino-acid sequence, 28 residues long: NLYQFKNMIKCTNTRMWWSFTNAGCYDG.

The protein belongs to the phospholipase A2 family. Group I subfamily. Requires Ca(2+) as cofactor. Expressed by the venom gland.

Its subcellular location is the secreted. It catalyses the reaction a 1,2-diacyl-sn-glycero-3-phosphocholine + H2O = a 1-acyl-sn-glycero-3-phosphocholine + a fatty acid + H(+). Its function is as follows. Snake venom phospholipase A2 (PLA2) that inhibits neuromuscular transmission by blocking acetylcholine release from the nerve termini. PLA2 catalyzes the calcium-dependent hydrolysis of the 2-acyl groups in 3-sn-phosphoglycerides. The sequence is that of Phospholipase A2 3 from Micrurus nigrocinctus (Central American coral snake).